We begin with the raw amino-acid sequence, 263 residues long: tRNA pseudouridine synthase A (263 aa).

Asp-51 functions as the Nucleophile in the catalytic mechanism. Tyr-109 is a binding site for substrate.

It belongs to the tRNA pseudouridine synthase TruA family. As to quaternary structure, homodimer.

It carries out the reaction uridine(38/39/40) in tRNA = pseudouridine(38/39/40) in tRNA. In terms of biological role, formation of pseudouridine at positions 38, 39 and 40 in the anticodon stem and loop of transfer RNAs. The polypeptide is tRNA pseudouridine synthase A (Mannheimia succiniciproducens (strain KCTC 0769BP / MBEL55E)).